Consider the following 249-residue polypeptide: Serine acetyltransferase (249 aa).

This sequence belongs to the transferase hexapeptide repeat family.

It localises to the cytoplasm. The enzyme catalyses L-serine + acetyl-CoA = O-acetyl-L-serine + CoA. It functions in the pathway amino-acid biosynthesis; L-cysteine biosynthesis; L-cysteine from L-serine: step 1/2. The protein is Serine acetyltransferase (cysE) of Synechocystis sp. (strain ATCC 27184 / PCC 6803 / Kazusa).